Consider the following 874-residue polypeptide: Cellulose synthase catalytic subunit [UDP-forming] (874 aa).

4 consecutive transmembrane segments (helical) span residues 30–50, 151–171, 173–193, and 230–250; these read SPFS…VFPL, ILGV…TQPF, PLSQ…VRRM, and LVCG…LVLG. The interval 271–364 is catalytic subdomain A; it reads QWPTVDIFVP…FVAIFDCDHV (94 aa). Asp-313 is a catalytic residue. The substrate site is built by Asp-360 and Asp-362. A catalytic subdomain B region spans residues 441-501; it reads KPLDEIGGIA…GQRIRWARGM (61 aa). Asp-457 is a catalytic residue. The next 5 membrane-spanning stretches (helical) occupy residues 525–545, 547–567, 592–612, 634–654, and 668–688; these read LNAM…TAPL, FLLL…LFVI, IYET…LINP, VISR…AAGV, and VIVS…AVAV. In terms of domain architecture, PilZ spans 694–790; the sequence is QVRRAHRVEI…QHIDFVQCTF (97 aa). Residues 833–853 form a helical membrane-spanning segment; sequence SVKVIFRSLTALIAWIVSFIP.

Belongs to the glycosyltransferase 2 family. Mg(2+) serves as cofactor.

It is found in the cell inner membrane. The enzyme catalyses [(1-&gt;4)-beta-D-glucosyl](n) + UDP-alpha-D-glucose = [(1-&gt;4)-beta-D-glucosyl](n+1) + UDP + H(+). It participates in glycan metabolism; bacterial cellulose biosynthesis. With respect to regulation, activated by bis-(3'-5') cyclic diguanylic acid (c-di-GMP). Functionally, catalytic subunit of cellulose synthase. It polymerizes uridine 5'-diphosphate glucose to cellulose, which is produced as an extracellular component for mechanical and chemical protection at the onset of the stationary phase, when the cells exhibit multicellular behavior (rdar morphotype). Coexpression of cellulose and thin aggregative fimbriae leads to a hydrophobic network with tightly packed cells embedded in a highly inert matrix. In Salmonella typhimurium (strain LT2 / SGSC1412 / ATCC 700720), this protein is Cellulose synthase catalytic subunit [UDP-forming] (bcsA).